The following is an 88-amino-acid chain: Small ribosomal subunit protein uS17 (88 aa).

The protein belongs to the universal ribosomal protein uS17 family. Part of the 30S ribosomal subunit.

Functionally, one of the primary rRNA binding proteins, it binds specifically to the 5'-end of 16S ribosomal RNA. This is Small ribosomal subunit protein uS17 from Xylella fastidiosa (strain M23).